The primary structure comprises 362 residues: Neisseria adhesin A (362 aa).

A signal peptide spans 1-23 (MKHFPSKVLTTAILATFCSGALA). Positions 24-169 (ATSDDDVKKA…NIVKIDEKLE (146 aa)) are head domain. Coiled coils occupy residues 90–146 (VTNL…LNKL) and 183–288 (NDIA…KETR). The segment at 170–307 (AVADTVDKHA…SGLFQPYNVG (138 aa)) is coiled stalk domain. 4 beta stranded membrane passes run 307 to 317 (GRFNVTAAVGG), 321 to 332 (ESAVAIGTGFRF), 339 to 345 (KAGVAVG), and 351 to 362 (SAAYHVGVNYEW). A translocator domain region spans residues 308–362 (RFNVTAAVGGYKSESAVAIGTGFRFTENFAAKAGVAVGTSSGSSAAYHVGVNYEW).

It belongs to the autotransporter-2 (AT-2) (TC 1.B.40) family. In terms of assembly, forms high molecular weight oligomers in whole cell extracts that are not disrupted by boiling in SDS buffer. Homotrimer. A fragment containing the N-terminal half of the mature protein (residues 24-210, head domain plus part of the stalk) binds human integrin beta-1 (ITGB1). It was not seen to bind immobilized purified CEACAMs 1, 3, 5, 6 or 8 nor commercially prepared type I collagen, fibronectin or matrigel.

Its subcellular location is the cell surface. The protein resides in the cell outer membrane. Its function is as follows. Adheres to and induces bacterial uptake by human epithelial cells. Upon expression in engineered Y.enterocolitica confers an 11- to 15-fold increase in bacterial adherence and uptake by human epithelial cell lines; part of the uptake is mediated by integrin beta-1 (ITGB1) suggesting it may be a human receptor for NadA. A bacterial cell surface protein; antisera against this protein induce complement-mediated killing of this and other strains. This chain is Neisseria adhesin A, found in Neisseria meningitidis serogroup B (strain ATCC BAA-335 / MC58).